The primary structure comprises 2531 residues: Probable polyketide synthase 26 (2531 aa).

The Ketosynthase family 3 (KS3) domain occupies 10–433 (QEDIAIIGFR…GSNCCLVLTE (424 aa)). Active-site for beta-ketoacyl synthase activity residues include C174, H316, and H356. The acyl/malonyl transferase stretch occupies residues 620–653 (GINPSFIVGHSLGELPMAFCSGMIDFDTVCYLLY). The For acyl/malonyl transferase activity role is filled by S630. An N-terminal hotdog fold region spans residues 915 to 1036 (MDTLGFSNEK…ANYHLSHRDD (122 aa)). The PKS/mFAS DH domain occupies 915 to 1206 (MDTLGFSNEK…LKSLIPLKDP (292 aa)). H948 acts as the Proton acceptor; for dehydratase activity in catalysis. The C-terminal hotdog fold stretch occupies residues 1055-1206 (NLTKLSKNQF…LKSLIPLKDP (152 aa)). D1117 serves as the catalytic Proton donor; for dehydratase activity. In terms of domain architecture, Carrier spans 2431-2509 (ASENPVKDLL…DNIKILTDSY (79 aa)). O-(pantetheine 4'-phosphoryl)serine is present on S2468.

Pantetheine 4'-phosphate serves as cofactor.

Functionally, probable polyketide synthase. This Dictyostelium discoideum (Social amoeba) protein is Probable polyketide synthase 26 (pks26).